We begin with the raw amino-acid sequence, 354 residues long: Methylthioribose-1-phosphate isomerase (354 aa).

Substrate-binding positions include 58–60 (RGA), Arg101, and Gln204. Asp245 functions as the Proton donor in the catalytic mechanism. 255–256 (NK) is a binding site for substrate.

This sequence belongs to the eIF-2B alpha/beta/delta subunits family. MtnA subfamily.

The catalysed reaction is 5-(methylsulfanyl)-alpha-D-ribose 1-phosphate = 5-(methylsulfanyl)-D-ribulose 1-phosphate. It functions in the pathway amino-acid biosynthesis; L-methionine biosynthesis via salvage pathway; L-methionine from S-methyl-5-thio-alpha-D-ribose 1-phosphate: step 1/6. Functionally, catalyzes the interconversion of methylthioribose-1-phosphate (MTR-1-P) into methylthioribulose-1-phosphate (MTRu-1-P). This is Methylthioribose-1-phosphate isomerase from Xanthomonas oryzae pv. oryzae (strain MAFF 311018).